The chain runs to 410 residues: UDP-N-acetylglucosamine--N-acetylmuramyl-(pentapeptide) pyrophosphoryl-undecaprenol N-acetylglucosamine transferase (410 aa).

Positions 1 to 35 (MKDTVSQPAGGRGATAPRPADAASPSCGSSPSADS) are disordered. Over residues 14–35 (ATAPRPADAASPSCGSSPSADS) the composition is skewed to low complexity. Residues 45–47 (TAG), N167, R204, S238, and Q334 contribute to the UDP-N-acetyl-alpha-D-glucosamine site.

It belongs to the glycosyltransferase 28 family. MurG subfamily.

It localises to the cell membrane. The catalysed reaction is di-trans,octa-cis-undecaprenyl diphospho-N-acetyl-alpha-D-muramoyl-L-alanyl-D-glutamyl-meso-2,6-diaminopimeloyl-D-alanyl-D-alanine + UDP-N-acetyl-alpha-D-glucosamine = di-trans,octa-cis-undecaprenyl diphospho-[N-acetyl-alpha-D-glucosaminyl-(1-&gt;4)]-N-acetyl-alpha-D-muramoyl-L-alanyl-D-glutamyl-meso-2,6-diaminopimeloyl-D-alanyl-D-alanine + UDP + H(+). The protein operates within cell wall biogenesis; peptidoglycan biosynthesis. Cell wall formation. Catalyzes the transfer of a GlcNAc subunit on undecaprenyl-pyrophosphoryl-MurNAc-pentapeptide (lipid intermediate I) to form undecaprenyl-pyrophosphoryl-MurNAc-(pentapeptide)GlcNAc (lipid intermediate II). The protein is UDP-N-acetylglucosamine--N-acetylmuramyl-(pentapeptide) pyrophosphoryl-undecaprenol N-acetylglucosamine transferase of Mycobacterium tuberculosis (strain ATCC 25177 / H37Ra).